The sequence spans 113 residues: Carboxysome shell protein CcmK4 (113 aa).

A BMC domain is found at 5 to 91 (AIGSLETKGF…PHENVEAVFP (87 aa)).

It belongs to the bacterial microcompartments protein family. CcmK subfamily. Homohexamer. Interacts stably with CcmK3, probably forms heterohexamers with a 1:2 CcmK3:CcmK4 stoichiometry.

It is found in the carboxysome. Its function is as follows. One of the shell proteins of the carboxysome, a polyhedral inclusion where RuBisCO (ribulose bisphosphate carboxylase, rbcL-rbcS) is sequestered. Assembles into hexamers which make sheets that form the facets of the polyhedral carboxysome. The hexamer central pore probably regulates metabolite flux. A minor shell protein of the carboxysome, a polyhedral inclusion where RuBisCO (ribulose bisphosphate carboxylase, rbcL-rbcS) is sequestered. Hexamers form sheets that form the facets of the polyhedral carboxysome. The shell is 4.5 nm thick, as observed for CcmK proteins. In PCC 7942 there are several CcmK paralogs with presumably functional differences; replacing the central pore residues (34-37) with those of CcmK2 from this organism (Tyr-Glu-Lys-Ile) allows the bacterium to make carboxysomes, but the expression level is too low to know if the carboxysome is functional for CO(2) fixation. This subunit probably makes both homohexamers and heterohexamers with CcmK3. The CcmK3-CcmK4 heterohexmers have been suggested to cap other hexamers, perhaps to alter metabolite flux. The polypeptide is Carboxysome shell protein CcmK4 (Synechococcus elongatus (strain ATCC 33912 / PCC 7942 / FACHB-805) (Anacystis nidulans R2)).